A 459-amino-acid polypeptide reads, in one-letter code: Zinc finger protein ZFP2 (459 aa).

C2H2-type zinc fingers lie at residues 100-122 (YGCD…QRIH), 128-150 (YTCN…QRTH), 156-178 (YKCH…QRTH), 184-206 (YQCK…ERIH), 212-234 (YKCH…QRTH), 240-262 (YECN…QRSH), 268-290 (YECS…QRNH), 296-318 (YKCN…QRLH), 324-346 (FECN…RRIH), 352-374 (YECM…QVIH), 380-402 (YECT…QRIH), 408-430 (YECD…QRIH), and 436-458 (YQCN…QRTH).

It belongs to the krueppel C2H2-type zinc-finger protein family.

The protein resides in the nucleus. Its function is as follows. Probable transcription factor involved in neuronal differentiation and/or phenotypic maintenance. This is Zinc finger protein ZFP2 (Zfp2) from Mus musculus (Mouse).